A 411-amino-acid polypeptide reads, in one-letter code: Tyrosine--tRNA ligase (411 aa).

Tyr-34 is a binding site for L-tyrosine. A 'HIGH' region motif is present at residues 39–48 (CTATSLHIGS). Positions 171 and 175 each coordinate L-tyrosine. The short motif at 231-235 (KMGKT) is the 'KMSKS' region element. Lys-234 contributes to the ATP binding site. Residues 345–411 (ITAFELFHEA…GKKRHILVKI (67 aa)) enclose the S4 RNA-binding domain.

The protein belongs to the class-I aminoacyl-tRNA synthetase family. TyrS type 1 subfamily. Homodimer.

The protein resides in the cytoplasm. It carries out the reaction tRNA(Tyr) + L-tyrosine + ATP = L-tyrosyl-tRNA(Tyr) + AMP + diphosphate + H(+). In terms of biological role, catalyzes the attachment of tyrosine to tRNA(Tyr) in a two-step reaction: tyrosine is first activated by ATP to form Tyr-AMP and then transferred to the acceptor end of tRNA(Tyr). The sequence is that of Tyrosine--tRNA ligase from Rickettsia bellii (strain RML369-C).